The sequence spans 351 residues: Molybdenum import ATP-binding protein ModC (351 aa).

In terms of domain architecture, ABC transporter spans 1-229 (MLEINIHQQL…DILADWQSET (229 aa)). 31-38 (GRSGAGKS) is an ATP binding site. A Mop domain is found at 290–351 (HSSIRNILNG…IYVQIKSVSL (62 aa)).

This sequence belongs to the ABC transporter superfamily. Molybdate importer (TC 3.A.1.8) family. As to quaternary structure, the complex is composed of two ATP-binding proteins (ModC), two transmembrane proteins (ModB) and a solute-binding protein (ModA).

The protein resides in the cell inner membrane. The catalysed reaction is molybdate(out) + ATP + H2O = molybdate(in) + ADP + phosphate + H(+). Its function is as follows. Part of the ABC transporter complex ModABC involved in molybdenum import. Responsible for energy coupling to the transport system. This Haemophilus ducreyi (strain 35000HP / ATCC 700724) protein is Molybdenum import ATP-binding protein ModC.